The following is a 156-amino-acid chain: Ribosome maturation factor RimP (156 aa).

This sequence belongs to the RimP family.

The protein resides in the cytoplasm. Its function is as follows. Required for maturation of 30S ribosomal subunits. This is Ribosome maturation factor RimP from Dictyoglomus thermophilum (strain ATCC 35947 / DSM 3960 / H-6-12).